Here is a 1479-residue protein sequence, read N- to C-terminus: ABC transporter ecdL (1479 aa).

A run of 3 helical transmembrane segments spans residues 32 to 52 (LLFE…SVAL), 82 to 102 (LSNA…WLSF), and 142 to 162 (IASI…VEAM). Asn183 and Asn234 each carry an N-linked (GlcNAc...) asparagine glycan. The next 2 membrane-spanning stretches (helical) occupy residues 251 to 271 (WGGF…PFLV) and 291 to 311 (SGLI…TAAF). Positions 258-535 (LCLIGVNYAQ…FVESLMGLRQ (278 aa)) constitute an ABC transmembrane type-1 1 domain. N-linked (GlcNAc...) asparagine glycosylation occurs at Asn345. The next 2 membrane-spanning stretches (helical) occupy residues 365-382 (LHET…LWLL) and 391-411 (VAAA…SGLL). N-linked (GlcNAc...) asparagine glycosylation occurs at Asn427. A run of 2 helical transmembrane segments spans residues 469–489 (LLVA…TFAF) and 503–523 (PLLA…GQAV). Residues 607–835 (IVLQNHTASW…GSSLRLEELV (229 aa)) enclose the ABC transporter 1 domain. Residues Asn611 and Asn628 are each glycosylated (N-linked (GlcNAc...) asparagine). 641 to 648 (GPIGSGKS) is an ATP binding site. 2 N-linked (GlcNAc...) asparagine glycosylation sites follow: Asn793 and Asn797. Helical transmembrane passes span 885 to 905 (TIGW…VVAL), 955 to 975 (LFAV…LHLM), 1028 to 1048 (ALIG…VIVY), 1052 to 1072 (YLAA…MFYL), and 1135 to 1155 (IWLT…LVSI). Residues 932-1193 (IWLKFWTEAN…LVYNWTALEN (262 aa)) form the ABC transmembrane type-1 2 domain. N-linked (GlcNAc...) asparagine glycosylation is present at Asn1161. A helical membrane pass occupies residues 1165 to 1185 (ASIGLALVNLIAFGANMKGLV). N-linked (GlcNAc...) asparagine glycosylation is present at Asn1187. Residues 1230–1461 (IKFKSVTASY…RSIFASLLRS (232 aa)) enclose the ABC transporter 2 domain. 1264 to 1271 (GRTGCGKS) provides a ligand contact to ATP. Positions 1460-1479 (RSGDEEPGNGHKHESEGEEE) are disordered. The span at 1461–1479 (SGDEEPGNGHKHESEGEEE) shows a compositional bias: basic and acidic residues.

It belongs to the ABC transporter superfamily. ABCC family. Conjugate transporter (TC 3.A.1.208) subfamily.

The protein resides in the cell membrane. Functionally, ABC transporter; part of the gene cluster that mediates the biosynthesis of echinocandin B, a fungal lipidated cyclic hexapeptide that acts as an antifungal agent. The protein is ABC transporter ecdL of Aspergillus rugulosus (Emericella rugulosa).